A 64-amino-acid chain; its full sequence is Ferredoxin-like protein in nif region (64 aa).

One can recognise a 4Fe-4S ferredoxin-type domain in the interval 2-30 (AFKIIASQCTQCGACEFECPSGAISFKTD). [4Fe-4S] cluster is bound by residues Cys-10, Cys-13, Cys-16, Cys-20, Cys-39, Cys-42, Cys-51, and Cys-55.

[4Fe-4S] cluster serves as cofactor.

The chain is Ferredoxin-like protein in nif region (fdxN) from Rhizobium leguminosarum bv. trifolii.